A 156-amino-acid polypeptide reads, in one-letter code: Small ribosomal subunit protein uS7 (156 aa).

The protein belongs to the universal ribosomal protein uS7 family. As to quaternary structure, part of the 30S ribosomal subunit. Contacts proteins S9 and S11.

Functionally, one of the primary rRNA binding proteins, it binds directly to 16S rRNA where it nucleates assembly of the head domain of the 30S subunit. Is located at the subunit interface close to the decoding center, probably blocks exit of the E-site tRNA. This Shewanella denitrificans (strain OS217 / ATCC BAA-1090 / DSM 15013) protein is Small ribosomal subunit protein uS7.